The chain runs to 684 residues: MSLWPPFRCRWKLAPRYSRRASPQQPQQDFEALLAECLRNGCLFEDTSFPATLSSIGSGSLLQKLPPRLQWKRPPELHSNPQFYFAKAKRLDLCQGIVGDCWFLAALQALALHQDILSRVVPLNQSFTEKYAGIFRFWFWHYGNWVPVVIDDRLPVNEAGQLVFVSSTYKNLFWGALLEKAYAKLSGSYEDLQSGQVSEALVDFTGGVTMTINLAEAHGNLWDILIEATYNRTLIGCQTHSGEKILENGLVEGHAYTLTGIRKVTCKHRPEYLVKLRNPWGKVEWKGDWSDSSSKWELLSPKEKILLLRKDNDGEFWMTLQDFKTHFVLLVICKLTPGLLSQEAAQKWTYTMREGRWEKRSTAGGQRQLLQDTFWKNPQFLLSVWRPEEGRRSLRPCSVLVSLLQKPRHRCRKRKPLLAIGFYLYRMNKYHDDQRRLPPEFFQRNTPLSQPDRFLKEKEVSQELCLEPGTYLIVPCILEAHQKSEFVLRVFSRKHIFYEIGSNSGVVFSKEIEDQNERQDEFFTKFFEKHPEINAVQLQNLLNQMTWSSLGSRQPFFSLEACQGILALLDLNASGTMSIQEFRDLWKQLKLSQKVFHKQDRGSGYLNWEQLHAAMREAGIMLSDDVCQLMLIRYGGPRLQMDFVSFIHLMLRVENMEDVFQNLTQDGKGIYLQKPEWMMMALYS.

In terms of domain architecture, Calpain catalytic spans 43 to 336; sequence LFEDTSFPAT…FVLLVICKLT (294 aa). Residues Cys101, His254, and Asn278 contribute to the active site. The tract at residues 337–503 is domain III; that stretch reads PGLLSQEAAQ…KHIFYEIGSN (167 aa). The linker stretch occupies residues 504–517; that stretch reads SGVVFSKEIEDQNE. Residues 518–683 form a domain IV region; the sequence is RQDEFFTKFF…KPEWMMMALY (166 aa). EF-hand domains lie at 557–592, 586–621, and 651–684; these read FSLE…LKLS, WKQL…AGIM, and LRVE…ALYS. 5 residues coordinate Ca(2+): Asp570, Asn572, Ser574, Thr576, and Glu581.

This sequence belongs to the peptidase C2 family. In terms of tissue distribution, not expressed in tissues tested.

Its function is as follows. Calcium-regulated non-lysosomal thiol-protease. The sequence is that of Calpain-14 (CAPN14) from Homo sapiens (Human).